Here is a 300-residue protein sequence, read N- to C-terminus: Inositol polyphosphate multikinase beta (300 aa).

S78 is modified (phosphoserine).

The protein belongs to the inositol phosphokinase (IPK) family. As to quaternary structure, interacts with KIN10 and KIN11. Post-translationally, phosphorylated by KIN10. In terms of tissue distribution, expressed in leaves, stems, roots, siliques and flowers. Detected in vascular strands, stigma cells, the abscission zones of fully elongated siliques, the root central cylinder and the root tip.

It localises to the nucleus. It carries out the reaction 1D-myo-inositol 1,4,5-trisphosphate + 2 ATP = 1D-myo-inositol 1,3,4,5,6-pentakisphosphate + 2 ADP + 2 H(+). It catalyses the reaction 1D-myo-inositol 1,3,4,6-tetrakisphosphate + ATP = 1D-myo-inositol 1,3,4,5,6-pentakisphosphate + ADP + H(+). Its activity is regulated as follows. Down-regulated by KIN10 through its protein phosphorylation. In terms of biological role, inositol phosphate kinase with a broad substrate specificity. Phosphorylates inositol 1,4,5-trisphosphate (Ins(1,4,5)P3), inositol 1,4,5,6-tetrakisphosphate (Ins(1,4,5,6)P4), inositol 1,3,4,5-tetrakisphosphate (Ins(1,3,4,5)P4), inositol 1,3,4,6-tetrakisphosphate (Ins(1,3,4,6)P4) and inositol 1,2,3,4,6-pentakisphosphate (Ins(1,2,3,4,6)P5) but not inositol 1,4-bisphosphate (Ins(1,4)P2), inositol 1,3,4-trisphosphate (Ins(1,3,4)P3), inositol 1,2,6-trisphosphate (Ins(1,2,6)P3), inositol 3,4,5,6-tetrakisphosphate (Ins(3,4,5,6)P4), inositol 1,3,4,5,6-pentakisphosphate (Ins(1,3,4,5,6)P5), inositol 1,2,4,5,6-pentakisphosphate (Ins(1,2,4,5,6)P5) or inositol hexakisphosphate (InsP6). Involved in the auxin signaling pathway. Regulates axillary shoot branching and is required for phytate synthesis in seeds. The polypeptide is Inositol polyphosphate multikinase beta (IPK2b) (Arabidopsis thaliana (Mouse-ear cress)).